A 196-amino-acid chain; its full sequence is MTDVWRLAIFVLMVNVLNDQVSCSGPPGPVGYPGVPGVPGPRGPPGQPGAAGRPGDPGPKGPSVKCPCRERSAFTVKFSGRLPPPSEPVVFTEVLYNTQRDLKESTGVFNCVEPGNYHFSFDVELYHCKVKIGLMKNHIQVMEKHQLSKNEYENASGAMIMPLRQGDKVWLEADVETEEPDQAKVVIYFSGFLISS.

A signal peptide spans 1–23 (MTDVWRLAIFVLMVNVLNDQVSC). In terms of domain architecture, Collagen-like spans 25–63 (GPPGPVGYPGVPGVPGPRGPPGQPGAAGRPGDPGPKGPS). Positions 28–47 (GPVGYPGVPGVPGPRGPPGQ) are enriched in pro residues. The segment at 28 to 64 (GPVGYPGVPGVPGPRGPPGQPGAAGRPGDPGPKGPSV) is disordered. The C1q domain maps to 67–196 (PCRERSAFTV…IYFSGFLISS (130 aa)).

In terms of tissue distribution, plasma; synthesized in the liver.

Its subcellular location is the secreted. Plasma proteins HP-20, HP-25, HP-27 and HP-55 form a 140 kDa complex via disulfide bonds in the plasma and are hibernation specific. The sequence is that of Hibernation-associated plasma protein HP-20 from Tamias sibiricus (Siberian chipmunk).